The sequence spans 477 residues: Bifunctional protein HldE (477 aa).

Residues 1–318 form a ribokinase region; that stretch reads MKVNLPAFER…ENAVRGRADT (318 aa). 195 to 198 contacts ATP; it reads NLSE. Aspartate 264 is an active-site residue. The segment at 344–477 is cytidylyltransferase; the sequence is MTNGVFDILH…IKKIQTESEK (134 aa).

In the N-terminal section; belongs to the carbohydrate kinase PfkB family. It in the C-terminal section; belongs to the cytidylyltransferase family. In terms of assembly, homodimer.

The enzyme catalyses D-glycero-beta-D-manno-heptose 7-phosphate + ATP = D-glycero-beta-D-manno-heptose 1,7-bisphosphate + ADP + H(+). It carries out the reaction D-glycero-beta-D-manno-heptose 1-phosphate + ATP + H(+) = ADP-D-glycero-beta-D-manno-heptose + diphosphate. Its pathway is nucleotide-sugar biosynthesis; ADP-L-glycero-beta-D-manno-heptose biosynthesis; ADP-L-glycero-beta-D-manno-heptose from D-glycero-beta-D-manno-heptose 7-phosphate: step 1/4. It participates in nucleotide-sugar biosynthesis; ADP-L-glycero-beta-D-manno-heptose biosynthesis; ADP-L-glycero-beta-D-manno-heptose from D-glycero-beta-D-manno-heptose 7-phosphate: step 3/4. Functionally, catalyzes the phosphorylation of D-glycero-D-manno-heptose 7-phosphate at the C-1 position to selectively form D-glycero-beta-D-manno-heptose-1,7-bisphosphate. Catalyzes the ADP transfer from ATP to D-glycero-beta-D-manno-heptose 1-phosphate, yielding ADP-D-glycero-beta-D-manno-heptose. The chain is Bifunctional protein HldE from Salmonella dublin (strain CT_02021853).